A 491-amino-acid chain; its full sequence is Allene oxide synthase 3 (491 aa).

3 residues coordinate heme b: Lys-104, His-135, and Lys-139. The (13S)-hydroperoxy-(9Z,11E)-octadecadienoate site is built by Asn-296 and Lys-302. Asn-296 lines the (13S)-hydroperoxy-(9Z,11E,15Z)-octadecatrienoate pocket. Heme b contacts are provided by Lys-442 and Cys-444.

Belongs to the cytochrome P450 family. Requires heme b as cofactor. In terms of tissue distribution, expressed in roots. Not detected in aerial tissues, including cotyledons, leaves, stems and flower buds.

It catalyses the reaction (13S)-hydroperoxy-(9Z,11E,15Z)-octadecatrienoate = (9Z,13S,15Z)-12,13-epoxyoctadeca-9,11,15-trienoate + H2O. The enzyme catalyses (13S)-hydroperoxy-(9Z,11E)-octadecadienoate = (9Z,13S)-12,13-epoxyoctadeca-9,11-dienoate + H2O. It carries out the reaction (9Z,13S,15Z)-12,13-epoxyoctadeca-9,11,15-trienoate = (9S,13S,15Z)-12-oxophyto-10,15-dienoate. Cytochrome P450 metabolizing both 13- and 9-hydroperoxides of linoleic and linolenic acids, but with a marked preference for 9-hydroperoxy fatty acids. Catalyzes not only the synthesis of allene oxide, but also its hydrolysis and cyclization. The first step is the synthesis of (12Z)-9,10-epoxyoctadeca-10,12-dienoic acid (9,10-EOD) and the final products are (9R)-alpha-ketol and the racemic cis-10-oxo-11-phytoenoic acid. The cyclase activity possesses regiospecificity and (9Z)-12,13-epoxyoctadeca-9,11-dienoic acid (12,13-EOD) is significantly less efficient as a substrate for cyclopentenone production than 9,10-EOD. Has no hydroperoxide lyase activity. May play a defensive role against soil-borne pests that affect roots or juvenile tissues as they emerge from the germinating seed. This is Allene oxide synthase 3 from Solanum lycopersicum (Tomato).